A 491-amino-acid chain; its full sequence is Probable glycogen synthase 2 (491 aa).

Lysine 15 serves as a coordination point for ADP-alpha-D-glucose.

The protein belongs to the glycosyltransferase 1 family. Bacterial/plant glycogen synthase subfamily.

The enzyme catalyses [(1-&gt;4)-alpha-D-glucosyl](n) + ADP-alpha-D-glucose = [(1-&gt;4)-alpha-D-glucosyl](n+1) + ADP + H(+). It participates in glycan biosynthesis; glycogen biosynthesis. Functionally, synthesizes alpha-1,4-glucan chains using ADP-glucose. This is Probable glycogen synthase 2 (glgA2) from Synechocystis sp. (strain ATCC 27184 / PCC 6803 / Kazusa).